The sequence spans 1357 residues: DNA-directed RNA polymerase subunit beta (1357 aa).

Belongs to the RNA polymerase beta chain family. The RNAP catalytic core consists of 2 alpha, 1 beta, 1 beta' and 1 omega subunit. When a sigma factor is associated with the core the holoenzyme is formed, which can initiate transcription.

It carries out the reaction RNA(n) + a ribonucleoside 5'-triphosphate = RNA(n+1) + diphosphate. In terms of biological role, DNA-dependent RNA polymerase catalyzes the transcription of DNA into RNA using the four ribonucleoside triphosphates as substrates. The protein is DNA-directed RNA polymerase subunit beta of Nitrosospira multiformis (strain ATCC 25196 / NCIMB 11849 / C 71).